Reading from the N-terminus, the 300-residue chain is Quinolinate synthase (300 aa).

Iminosuccinate is bound by residues His-23 and Ser-40. Residue Cys-85 coordinates [4Fe-4S] cluster. Iminosuccinate contacts are provided by residues 111-113 and Ser-128; that span reads YIN. Cys-171 contributes to the [4Fe-4S] cluster binding site. Residues 198-200 and Thr-215 each bind iminosuccinate; that span reads HPE. Position 258 (Cys-258) interacts with [4Fe-4S] cluster.

This sequence belongs to the quinolinate synthase family. Type 2 subfamily. [4Fe-4S] cluster is required as a cofactor.

It localises to the cytoplasm. The enzyme catalyses iminosuccinate + dihydroxyacetone phosphate = quinolinate + phosphate + 2 H2O + H(+). The protein operates within cofactor biosynthesis; NAD(+) biosynthesis; quinolinate from iminoaspartate: step 1/1. Catalyzes the condensation of iminoaspartate with dihydroxyacetone phosphate to form quinolinate. This is Quinolinate synthase from Clostridium novyi (strain NT).